We begin with the raw amino-acid sequence, 277 residues long: NH(3)-dependent NAD(+) synthetase (277 aa).

47–54 (GISGGQDS) lines the ATP pocket. Asp-53 is a binding site for Mg(2+). Arg-141 lines the deamido-NAD(+) pocket. Thr-161 contacts ATP. Position 166 (Glu-166) interacts with Mg(2+). Residues Lys-174 and Asp-181 each contribute to the deamido-NAD(+) site. The ATP site is built by Lys-190 and Thr-212. 261–262 (HK) is a binding site for deamido-NAD(+).

It belongs to the NAD synthetase family. As to quaternary structure, homodimer.

The enzyme catalyses deamido-NAD(+) + NH4(+) + ATP = AMP + diphosphate + NAD(+) + H(+). It functions in the pathway cofactor biosynthesis; NAD(+) biosynthesis; NAD(+) from deamido-NAD(+) (ammonia route): step 1/1. Functionally, catalyzes the ATP-dependent amidation of deamido-NAD to form NAD. Uses ammonia as a nitrogen source. The protein is NH(3)-dependent NAD(+) synthetase of Lactobacillus johnsonii (strain CNCM I-12250 / La1 / NCC 533).